The following is a 306-amino-acid chain: Acetylglutamate kinase (306 aa).

Substrate-binding positions include 75–76 (GG), R97, and N197.

It belongs to the acetylglutamate kinase family. ArgB subfamily.

It is found in the cytoplasm. The catalysed reaction is N-acetyl-L-glutamate + ATP = N-acetyl-L-glutamyl 5-phosphate + ADP. The protein operates within amino-acid biosynthesis; L-arginine biosynthesis; N(2)-acetyl-L-ornithine from L-glutamate: step 2/4. Its function is as follows. Catalyzes the ATP-dependent phosphorylation of N-acetyl-L-glutamate. The chain is Acetylglutamate kinase from Streptomyces coelicolor (strain ATCC BAA-471 / A3(2) / M145).